The chain runs to 447 residues: tRNA-2-methylthio-N(6)-dimethylallyladenosine synthase (447 aa).

One can recognise an MTTase N-terminal domain in the interval 10–128 (KLFCISTYGC…FPEYLHRVLQ (119 aa)). Residues Cys19, Cys55, Cys89, Cys165, Cys169, and Cys172 each coordinate [4Fe-4S] cluster. One can recognise a Radical SAM core domain in the interval 151 to 382 (RKSDVKAFVT…EAINKKVVIK (232 aa)). The region spanning 384–447 (KEYEGKVVEV…PFSLIGEIVE (64 aa)) is the TRAM domain.

The protein belongs to the methylthiotransferase family. MiaB subfamily. As to quaternary structure, monomer. Requires [4Fe-4S] cluster as cofactor.

The protein resides in the cytoplasm. It carries out the reaction N(6)-dimethylallyladenosine(37) in tRNA + (sulfur carrier)-SH + AH2 + 2 S-adenosyl-L-methionine = 2-methylsulfanyl-N(6)-dimethylallyladenosine(37) in tRNA + (sulfur carrier)-H + 5'-deoxyadenosine + L-methionine + A + S-adenosyl-L-homocysteine + 2 H(+). In terms of biological role, catalyzes the methylthiolation of N6-(dimethylallyl)adenosine (i(6)A), leading to the formation of 2-methylthio-N6-(dimethylallyl)adenosine (ms(2)i(6)A) at position 37 in tRNAs that read codons beginning with uridine. This is tRNA-2-methylthio-N(6)-dimethylallyladenosine synthase from Clostridium perfringens (strain SM101 / Type A).